A 396-amino-acid polypeptide reads, in one-letter code: Probable sugar efflux transporter (396 aa).

12 helical membrane-spanning segments follow: residues 15–35, 50–70, 81–101, 103–123, 136–156, 170–190, 209–229, 246–266, 275–295, 299–319, 333–353, and 364–384; these read VVTL…PVGL, VGIM…PFML, LICL…SWSF, VLVI…SITA, AQAL…GLPL, FFAI…LLPL, PALM…YTAY, FATA…VIFG, ALVS…LPAA, IHLG…GLGM, VAMA…ALVG, and MIGY…IIIF.

It belongs to the major facilitator superfamily. SotB (TC 2.A.1.2) family.

The protein localises to the cell inner membrane. Involved in the efflux of sugars. The physiological role may be the reduction of the intracellular concentration of toxic sugars or sugar metabolites. This is Probable sugar efflux transporter from Escherichia coli O127:H6 (strain E2348/69 / EPEC).